Here is a 196-residue protein sequence, read N- to C-terminus: Orotate phosphoribosyltransferase (196 aa).

A 5-phospho-alpha-D-ribose 1-diphosphate-binding site is contributed by 117 to 125 (EDVVTTGLS). Orotate contacts are provided by T121 and R149.

The protein belongs to the purine/pyrimidine phosphoribosyltransferase family. PyrE subfamily. In terms of assembly, homodimer. Mg(2+) serves as cofactor.

It catalyses the reaction orotidine 5'-phosphate + diphosphate = orotate + 5-phospho-alpha-D-ribose 1-diphosphate. It participates in pyrimidine metabolism; UMP biosynthesis via de novo pathway; UMP from orotate: step 1/2. Catalyzes the transfer of a ribosyl phosphate group from 5-phosphoribose 1-diphosphate to orotate, leading to the formation of orotidine monophosphate (OMP). The chain is Orotate phosphoribosyltransferase from Rhizorhabdus wittichii (strain DSM 6014 / CCUG 31198 / JCM 15750 / NBRC 105917 / EY 4224 / RW1) (Sphingomonas wittichii).